The sequence spans 256 residues: Dioxygenase lolE1 (256 aa).

Fe cation-binding residues include H125, D127, and H203.

Belongs to the PhyH family. As to quaternary structure, homodimer. Fe cation is required as a cofactor.

Its pathway is alkaloid biosynthesis. In terms of biological role, dioxygenase; part of the gene cluster that mediates the biosynthesis of loline alkaloids, potent insecticidal agents composed of a pyrrolizidine ring system and an uncommon ether bridge linking carbons 2 and 7. Lolines are structurally differentiated by the various modifications of the L-amino group and include norloline, loline, N-methylloline, N-acetylloline, N-acetylnorloline, and N-formylloline. The first committed step is the condensation of O-acetyl-L-homoserine (derived from L-aspartic acid) and L-proline, probably catalyzed by the gamma-type pyridoxal 5'-phosphate(PLP)-dependent enzyme lolC, to give the diamino diacid, NACPP. Ensuing cyclization, decarboxylation, and acetylation steps yield 1-exo-acetamidopyrrolizidine (AcAP). LolO is required for installation of the ether bridge upon the pathway intermediate, 1-exo-acetamidopyrrolizidine (AcAP). In sequential 2-oxoglutarate- and O(2)-consuming steps, lolO removes hydrogens from C2 and C7 of AcAP to form both carbon-oxygen bonds in N-acetylnorloline (NANL), the precursor to all other lolines. The enzymes lolD, lolE, lolF and lolT have also been proposed to be involved in the ether-bridge installation. Further processing of the exocyclic moiety of NANL by fungal N-acetamidase (LolN), methyltransferase (LolM), and cytochrome P450 (LolP) enzymes, with occasional involvement of a plant acetyltransferase, generates the other known lolines. LolN transforms NANL to norlonine which is monomethylated and dimethylated to respectively lonine and N-methyllonine (NML) by lolM. LolP catalyzes hydroxylation of the methyl group in N-methylloline (NML) and further oxygenation to N-formylloline (NFL). A plant acetyltransferase is responsible for the acetylation of loline to form N-acetylloline (NAL). LolA might interact with aspartate kinase to prevent feedback inhibition of its activity by these end products and thereby promote production of L-homoserine from L-aspartate. The polypeptide is Dioxygenase lolE1 (Epichloe uncinata (Endophyte fungus)).